The primary structure comprises 663 residues: DNA ligase 1 (663 aa).

NAD(+) is bound by residues 28–32 (DKEYD) and 76–77 (SL). The N6-AMP-lysine intermediate role is filled by Lys-118. NAD(+)-binding residues include Arg-139, Glu-173, and Lys-310. Zn(2+) contacts are provided by Cys-403, Cys-406, Cys-419, and Cys-425. Residues 583 to 663 (VSESVFNDKT…KFEELIESVK (81 aa)) enclose the BRCT domain.

It belongs to the NAD-dependent DNA ligase family. LigA subfamily. Mg(2+) is required as a cofactor. The cofactor is Mn(2+).

It carries out the reaction NAD(+) + (deoxyribonucleotide)n-3'-hydroxyl + 5'-phospho-(deoxyribonucleotide)m = (deoxyribonucleotide)n+m + AMP + beta-nicotinamide D-nucleotide.. Its function is as follows. DNA ligase that catalyzes the formation of phosphodiester linkages between 5'-phosphoryl and 3'-hydroxyl groups in double-stranded DNA using NAD as a coenzyme and as the energy source for the reaction. It is essential for DNA replication and repair of damaged DNA. This Clostridium acetobutylicum (strain ATCC 824 / DSM 792 / JCM 1419 / IAM 19013 / LMG 5710 / NBRC 13948 / NRRL B-527 / VKM B-1787 / 2291 / W) protein is DNA ligase 1.